A 364-amino-acid chain; its full sequence is Palmitoyltransferase ZDHHC9 (364 aa).

The Cytoplasmic portion of the chain corresponds to 1–35; sequence MSVMVVRKKVTRKWEKLPGRNTFCCDGRVMMARQK. A helical transmembrane segment spans residues 36-56; it reads GIFYLTLFLILGTCTLFFAFE. Topologically, residues 57–63 are lumenal; the sequence is CRYLAVQ. Residues 64–84 form a helical membrane-spanning segment; that stretch reads LSPAIPVFAAMLFLFSMATLL. Over 85 to 183 the chain is Cytoplasmic; sequence RTSFSDPGVI…NCVGKRNYRY (99 aa). The DHHC domain occupies 139 to 189; sequence KYCYTCKIFRPPRASHCSICDNCVERFDHHCPWVGNCVGKRNYRYFYLFIL. Cys-169 functions as the S-palmitoyl cysteine intermediate in the catalytic mechanism. The helical transmembrane segment at 184 to 204 threads the bilayer; sequence FYLFILSLSLLTIYVFAFNIV. Residues 205-228 lie on the Lumenal side of the membrane; sequence YVALKSLKIGFLETLKETPGTVLE. A helical transmembrane segment spans residues 229 to 249; it reads VLICFFTLWSVVGLTGFHTFL. At 250–364 the chain is on the cytoplasmic side; that stretch reads VALNQTTNED…PPQEASEAEK (115 aa). Positions 303–364 are disordered; sequence PLEESGSRPP…PPQEASEAEK (62 aa). Over residues 310-336 the composition is skewed to polar residues; sequence RPPSTQETSSSLLPQSPASTEHMNSNE. The span at 346-356 shows a compositional bias: pro residues; that stretch reads EMPPPEPPEPP.

This sequence belongs to the DHHC palmitoyltransferase family. ERF2/ZDHHC9 subfamily. Interacts with GOLGA7.

The protein resides in the endoplasmic reticulum membrane. The protein localises to the golgi apparatus membrane. The enzyme catalyses L-cysteinyl-[protein] + hexadecanoyl-CoA = S-hexadecanoyl-L-cysteinyl-[protein] + CoA. Palmitoyltransferase that catalyzes the addition of palmitate onto various protein substrates, such as ADRB2, GSDMD, HRAS, NRAS and CGAS. The ZDHHC9-GOLGA7 complex is a palmitoyltransferase specific for HRAS and NRAS. May have a palmitoyltransferase activity toward the beta-2 adrenergic receptor/ADRB2 and therefore regulate G protein-coupled receptor signaling. Acts as a regulator of innate immunity by catalyzing palmitoylation of CGAS, thereby promoting CGAS homodimerization and cyclic GMP-AMP synthase activity. Activates pyroptosis by catalyzing palmitoylation of gasdermin-D (GSDMD), thereby promoting membrane translocation and pore formation of GSDMD. The polypeptide is Palmitoyltransferase ZDHHC9 (Zdhhc9) (Mus musculus (Mouse)).